Here is a 426-residue protein sequence, read N- to C-terminus: UDP-N-acetylglucosamine 1-carboxyvinyltransferase (426 aa).

Residue 22–23 (KN) participates in phosphoenolpyruvate binding. R93 is a binding site for UDP-N-acetyl-alpha-D-glucosamine. The Proton donor role is filled by D117. Residues D312 and M334 each contribute to the UDP-N-acetyl-alpha-D-glucosamine site.

This sequence belongs to the EPSP synthase family. MurA subfamily.

The protein resides in the cytoplasm. The enzyme catalyses phosphoenolpyruvate + UDP-N-acetyl-alpha-D-glucosamine = UDP-N-acetyl-3-O-(1-carboxyvinyl)-alpha-D-glucosamine + phosphate. The protein operates within cell wall biogenesis; peptidoglycan biosynthesis. Its function is as follows. Cell wall formation. Adds enolpyruvyl to UDP-N-acetylglucosamine. The chain is UDP-N-acetylglucosamine 1-carboxyvinyltransferase from Treponema denticola (strain ATCC 35405 / DSM 14222 / CIP 103919 / JCM 8153 / KCTC 15104).